The sequence spans 347 residues: NADH-ubiquinone oxidoreductase chain 2 (347 aa).

A run of 10 helical transmembrane segments spans residues 13–33, 55–75, 96–116, 122–142, 151–171, 178–198, 199–219, 237–257, 277–297, and 326–346; these read VFTGTLITALSSHWFFAWLGL, AAIKYFLTQATASMIFLMAIL, LMIVTALAMKLGMAPFHFWVP, VPLTSGLLLLTWQKLAPISIM, TNILLTLSILSILVGSWGGLN, ILAYSSITHMGWMVAVLPYNP, NITILNLIIYITLTTTTFLIL, LTWLMPLISSTLLSLGGLPPL, IAPTIMAIISLLNLYFYARLI, and LPTLTILTALLLPISPLILSI.

It belongs to the complex I subunit 2 family. In terms of assembly, core subunit of respiratory chain NADH dehydrogenase (Complex I) which is composed of 45 different subunits. Interacts with TMEM242.

It localises to the mitochondrion inner membrane. It catalyses the reaction a ubiquinone + NADH + 5 H(+)(in) = a ubiquinol + NAD(+) + 4 H(+)(out). Its function is as follows. Core subunit of the mitochondrial membrane respiratory chain NADH dehydrogenase (Complex I) which catalyzes electron transfer from NADH through the respiratory chain, using ubiquinone as an electron acceptor. Essential for the catalytic activity and assembly of complex I. This Pongo pygmaeus (Bornean orangutan) protein is NADH-ubiquinone oxidoreductase chain 2.